A 273-amino-acid polypeptide reads, in one-letter code: Tryptophan synthase alpha chain (273 aa).

Active-site proton acceptor residues include Glu49 and Asp60.

It belongs to the TrpA family. As to quaternary structure, tetramer of two alpha and two beta chains.

The catalysed reaction is (1S,2R)-1-C-(indol-3-yl)glycerol 3-phosphate + L-serine = D-glyceraldehyde 3-phosphate + L-tryptophan + H2O. The protein operates within amino-acid biosynthesis; L-tryptophan biosynthesis; L-tryptophan from chorismate: step 5/5. Functionally, the alpha subunit is responsible for the aldol cleavage of indoleglycerol phosphate to indole and glyceraldehyde 3-phosphate. This is Tryptophan synthase alpha chain from Thiobacillus denitrificans (strain ATCC 25259 / T1).